Here is a 113-residue protein sequence, read N- to C-terminus: MELPANVQNQLMQFQQLQQQLQMIMYQKQQFETQLKEMEKAIEEMEKSDSEEVFKMAGGILVKRNKAEVKEELSEKIETLQLRVTTFEKQEEKMQKRYTELQESLQKVMGQGQ.

Belongs to the prefoldin subunit beta family. Heterohexamer of two alpha and four beta subunits.

It localises to the cytoplasm. Functionally, molecular chaperone capable of stabilizing a range of proteins. Seems to fulfill an ATP-independent, HSP70-like function in archaeal de novo protein folding. The chain is Prefoldin subunit beta from Methanococcus maripaludis (strain DSM 14266 / JCM 13030 / NBRC 101832 / S2 / LL).